The following is a 452-amino-acid chain: 23S rRNA (uracil(1939)-C(5))-methyltransferase RlmD (452 aa).

Residues 1-23 form a disordered region; that stretch reads MSRKKSNGGLRFQPAGGNRATQI. Residues 22–80 enclose the TRAM domain; that stretch reads QIPVGKKQRLLIERVAGDGRGIAFIEGRTWFVSGALGGEEVEARVLGARGKVVEARLER. Residues Cys-93, Cys-99, Cys-102, and Cys-181 each coordinate [4Fe-4S] cluster. S-adenosyl-L-methionine is bound by residues Gln-285, Phe-314, Asn-319, Glu-335, Asp-362, and Asp-383. Cys-409 functions as the Nucleophile in the catalytic mechanism.

It belongs to the class I-like SAM-binding methyltransferase superfamily. RNA M5U methyltransferase family. RlmD subfamily.

It carries out the reaction uridine(1939) in 23S rRNA + S-adenosyl-L-methionine = 5-methyluridine(1939) in 23S rRNA + S-adenosyl-L-homocysteine + H(+). Functionally, catalyzes the formation of 5-methyl-uridine at position 1939 (m5U1939) in 23S rRNA. The protein is 23S rRNA (uracil(1939)-C(5))-methyltransferase RlmD of Pseudomonas entomophila (strain L48).